We begin with the raw amino-acid sequence, 256 residues long: Pimeloyl-[acyl-carrier protein] methyl ester esterase (256 aa).

The AB hydrolase-1 domain maps to 15 to 242 (HLVLLHGWGL…AAHAPFISHP (228 aa)). Residues Trp-22, 82–83 (SL), and 143–147 (FLALQ) contribute to the substrate site. Ser-82 serves as the catalytic Nucleophile. Catalysis depends on residues Asp-207 and His-235. Position 235 (His-235) interacts with substrate.

This sequence belongs to the AB hydrolase superfamily. Carboxylesterase BioH family. As to quaternary structure, monomer.

It localises to the cytoplasm. The catalysed reaction is 6-carboxyhexanoyl-[ACP] methyl ester + H2O = 6-carboxyhexanoyl-[ACP] + methanol + H(+). The protein operates within cofactor biosynthesis; biotin biosynthesis. Its function is as follows. The physiological role of BioH is to remove the methyl group introduced by BioC when the pimeloyl moiety is complete. It allows to synthesize pimeloyl-ACP via the fatty acid synthetic pathway through the hydrolysis of the ester bonds of pimeloyl-ACP esters. This Citrobacter koseri (strain ATCC BAA-895 / CDC 4225-83 / SGSC4696) protein is Pimeloyl-[acyl-carrier protein] methyl ester esterase.